Reading from the N-terminus, the 505-residue chain is RNA-splicing ligase RtcB homolog (505 aa).

Residues Asp-119, Cys-122, His-227, and His-259 each coordinate Mn(2+). GMP is bound at residue 226–230; that stretch reads NHYAE. Ser-300 carries the post-translational modification Phosphoserine. His-353 lines the Mn(2+) pocket. GMP is bound by residues 353–354, 402–405, Ser-409, and 428–431; these read HN, GGTM, and HGAG. His-428 serves as the catalytic GMP-histidine intermediate. Residue Lys-496 forms a Glycyl lysine isopeptide (Lys-Gly) (interchain with G-Cter in SUMO2) linkage. Residue Lys-504 coordinates GMP.

This sequence belongs to the RtcB family. As to quaternary structure, catalytic component of the tRNA-splicing ligase complex. The cofactor is Mn(2+).

The protein resides in the nucleus. It localises to the cytoplasm. The catalysed reaction is a 3'-end 3'-phospho-ribonucleotide-RNA + a 5'-end dephospho-ribonucleoside-RNA + GTP = a ribonucleotidyl-ribonucleotide-RNA + GMP + diphosphate. It carries out the reaction a 3'-end 2',3'-cyclophospho-ribonucleotide-RNA + a 5'-end dephospho-ribonucleoside-RNA + GTP + H2O = a ribonucleotidyl-ribonucleotide-RNA + GMP + diphosphate + H(+). Catalytic subunit of the tRNA-splicing ligase complex that acts by directly joining spliced tRNA halves to mature-sized tRNAs by incorporating the precursor-derived splice junction phosphate into the mature tRNA as a canonical 3',5'-phosphodiester. May act as an RNA ligase with broad substrate specificity, and may function toward other RNAs. In Bos taurus (Bovine), this protein is RNA-splicing ligase RtcB homolog.